The following is a 265-amino-acid chain: 3-methyl-2-oxobutanoate hydroxymethyltransferase (265 aa).

The Mg(2+) site is built by Asp-45 and Asp-84. 3-methyl-2-oxobutanoate-binding positions include 45–46 (DS), Asp-84, and Lys-114. Glu-116 contacts Mg(2+). The Proton acceptor role is filled by Glu-183.

Belongs to the PanB family. Homodecamer; pentamer of dimers. The cofactor is Mg(2+).

The protein localises to the cytoplasm. The catalysed reaction is 3-methyl-2-oxobutanoate + (6R)-5,10-methylene-5,6,7,8-tetrahydrofolate + H2O = 2-dehydropantoate + (6S)-5,6,7,8-tetrahydrofolate. The protein operates within cofactor biosynthesis; (R)-pantothenate biosynthesis; (R)-pantoate from 3-methyl-2-oxobutanoate: step 1/2. In terms of biological role, catalyzes the reversible reaction in which hydroxymethyl group from 5,10-methylenetetrahydrofolate is transferred onto alpha-ketoisovalerate to form ketopantoate. This chain is 3-methyl-2-oxobutanoate hydroxymethyltransferase, found in Salinibacter ruber (strain DSM 13855 / M31).